The sequence spans 593 residues: NADH-quinone oxidoreductase subunit C/D (593 aa).

Residues Met1–Gln184 are NADH dehydrogenase I subunit C. Residues Asp208 to Arg593 form an NADH dehydrogenase I subunit D region.

In the N-terminal section; belongs to the complex I 30 kDa subunit family. This sequence in the C-terminal section; belongs to the complex I 49 kDa subunit family. As to quaternary structure, NDH-1 is composed of 13 different subunits. Subunits NuoB, CD, E, F, and G constitute the peripheral sector of the complex.

It localises to the cell inner membrane. The catalysed reaction is a quinone + NADH + 5 H(+)(in) = a quinol + NAD(+) + 4 H(+)(out). In terms of biological role, NDH-1 shuttles electrons from NADH, via FMN and iron-sulfur (Fe-S) centers, to quinones in the respiratory chain. The immediate electron acceptor for the enzyme in this species is believed to be ubiquinone. Couples the redox reaction to proton translocation (for every two electrons transferred, four hydrogen ions are translocated across the cytoplasmic membrane), and thus conserves the redox energy in a proton gradient. In Azotobacter vinelandii (strain DJ / ATCC BAA-1303), this protein is NADH-quinone oxidoreductase subunit C/D.